We begin with the raw amino-acid sequence, 92 residues long: Serine rich endogenous peptide 11 (92 aa).

A signal peptide spans 1–29; the sequence is MENNTFSSKSINLLILLLLLCTFLCQTES. The tract at residues 50–92 is disordered; that stretch reads PNTDIGTPSSTSDRGGGGNGRRLMSQMDVGASSSGQGGGRNRH. Positions 53 to 62 are enriched in polar residues; sequence DIGTPSSTSD. 2 short sequence motifs (SCOOP motif) span residues 53-67 and 75-89; these read DIGTPSSTSDRGGGG and QMDVGASSSGQGGGR. 2 short sequence motifs (sxS motif essential for MIK2 binding) span residues 59–61 and 81–83; these read STS and SSS.

The protein belongs to the serine rich endogenous peptide (SCOOP) phytocytokine family. In terms of assembly, interacts with MIK2 (via extracellular leucine-rich repeat domain); this interaction triggers the formation of complex between MIK2 and the BAK1/SERK3 and SERK4 coreceptors, and subsequent BAK1 activation by phosphorylation. In terms of tissue distribution, mostly expressed in seedlings shoots and roots, and, to a lower extent, in leaves.

The protein localises to the cell membrane. It localises to the secreted. The protein resides in the extracellular space. Its subcellular location is the apoplast. Brassicaceae-specific phytocytokine (plant endogenous peptide released into the apoplast) perceived by MIK2 in a BAK1/SERK3 and SERK4 coreceptors-dependent manner, that modulates various physiological and antimicrobial processes including growth prevention and reactive oxygen species (ROS) response regulation. In Arabidopsis thaliana (Mouse-ear cress), this protein is Serine rich endogenous peptide 11.